The primary structure comprises 335 residues: PA-phosphatase related-family protein DDB_G0275547 (335 aa).

6 helical membrane-spanning segments follow: residues Val-43–Phe-63, Val-93–Val-113, Ile-124–Phe-144, Ser-202–Phe-222, Gly-226–Ile-246, and His-254–Tyr-274.

The protein belongs to the PA-phosphatase related phosphoesterase family.

The protein localises to the membrane. The protein is PA-phosphatase related-family protein DDB_G0275547 of Dictyostelium discoideum (Social amoeba).